The following is a 204-amino-acid chain: Guanylate kinase (204 aa).

The Guanylate kinase-like domain maps to 5–184; sequence GLLLVLSGPS…AVDHIKSIVE (180 aa). Position 12–19 (12–19) interacts with ATP; the sequence is GPSGVGKG.

Belongs to the guanylate kinase family.

Its subcellular location is the cytoplasm. It carries out the reaction GMP + ATP = GDP + ADP. In terms of biological role, essential for recycling GMP and indirectly, cGMP. The chain is Guanylate kinase from Lactobacillus johnsonii (strain CNCM I-12250 / La1 / NCC 533).